A 465-amino-acid polypeptide reads, in one-letter code: Cysteine--tRNA ligase (465 aa).

Cysteine 27 provides a ligand contact to Zn(2+). Residues 29–39 carry the 'HIGH' region motif; that stretch reads PTVYNFFHIGN. Cysteine 207, histidine 232, and glutamate 236 together coordinate Zn(2+). A 'KMSKS' region motif is present at residues 264–268; the sequence is KMSKS. Lysine 267 serves as a coordination point for ATP.

The protein belongs to the class-I aminoacyl-tRNA synthetase family. As to quaternary structure, monomer. Zn(2+) serves as cofactor.

Its subcellular location is the cytoplasm. It carries out the reaction tRNA(Cys) + L-cysteine + ATP = L-cysteinyl-tRNA(Cys) + AMP + diphosphate. The chain is Cysteine--tRNA ligase from Clostridium botulinum (strain 657 / Type Ba4).